The chain runs to 551 residues: Glucose-6-phosphate isomerase (551 aa).

Catalysis depends on E352, which acts as the Proton donor. Active-site residues include H383 and K511.

Belongs to the GPI family.

It localises to the cytoplasm. The enzyme catalyses alpha-D-glucose 6-phosphate = beta-D-fructose 6-phosphate. The protein operates within carbohydrate biosynthesis; gluconeogenesis. It functions in the pathway carbohydrate degradation; glycolysis; D-glyceraldehyde 3-phosphate and glycerone phosphate from D-glucose: step 2/4. Functionally, catalyzes the reversible isomerization of glucose-6-phosphate to fructose-6-phosphate. This Chlorobium luteolum (strain DSM 273 / BCRC 81028 / 2530) (Pelodictyon luteolum) protein is Glucose-6-phosphate isomerase.